A 141-amino-acid polypeptide reads, in one-letter code: Cystatin-13 (141 aa).

The signal sequence occupies residues 1-24 (MARFLQTLLFLVIMVEFVSRRVEA). Residues 76–80 (QITDS) form a secondary area of contact region. 2 cysteine pairs are disulfide-bonded: C94–C104 and C118–C138.

Belongs to the cystatin family. Expressed exclusively in testis. Found in spermatagonia, spermatocytes, round spermatids, elongating spermatids and spermatozoa.

The protein localises to the secreted. It localises to the cytoplasm. In terms of biological role, may perform a specialized role during sperm development and maturation. The protein is Cystatin-13 of Mus musculus (Mouse).